Reading from the N-terminus, the 631-residue chain is RING finger protein 112 (631 aa).

Residues 57 to 98 (CSICLERLRDPISLDCGHDFCIRCFSTHRLPGCEPPCCPECR) form an RING-type zinc finger. The interaction with ZBTB16 stretch occupies residues 131 to 631 (PVRAEPLLLV…GDREPLLQEE (501 aa)). A GB1/RHD3-type G domain is found at 166-397 (DTPVCLLAVL…YVSDVLSAAP (232 aa)). 318-319 (RD) is a GTP binding site. 2 helical membrane-spanning segments follow: residues 547–567 (LAAV…GVVG) and 580–600 (GMVA…GGGV).

The protein belongs to the TRAFAC class dynamin-like GTPase superfamily. GB1/RHD3 GTPase family. GB1 subfamily. As to quaternary structure, self-associates. Interacts with SP1 in an oxidative stress-regulated manner. Interacts with SIGMAR1 in an oxidative stress-regulated manner. Interacts with ZBTB16 (via C2H2-type zinc finger domains 1 and 2). Post-translationally, auto-ubiquitinated. As to expression, predominantly expressed in brain. Decreased expression in glioma brain tumors as compared to normal brains (at protein level).

It localises to the membrane. Its subcellular location is the cytoplasm. The protein resides in the nucleus. The protein localises to the nuclear body. It is found in the nucleoplasm. It localises to the endosome. Its subcellular location is the cytoplasmic vesicle. The protein resides in the secretory vesicle. The protein localises to the synaptic vesicle. It is found in the postsynaptic density. It localises to the perikaryon. Its subcellular location is the cell projection. The protein resides in the neuron projection. The enzyme catalyses S-ubiquitinyl-[E2 ubiquitin-conjugating enzyme]-L-cysteine + [acceptor protein]-L-lysine = [E2 ubiquitin-conjugating enzyme]-L-cysteine + N(6)-ubiquitinyl-[acceptor protein]-L-lysine.. Its pathway is protein modification; protein ubiquitination. Its function is as follows. E3 ubiquitin-protein ligase that plays an important role in neuronal differentiation, including neurogenesis and gliogenesis, during brain development. During embryonic development initiates neuronal differentiation by inducing cell cycle arrest at the G0/G1 phase through up-regulation of cell-cycle regulatory proteins. Plays a role not only in the fetal period during the development of the nervous system, but also in the adult brain, where it is involved in the maintenance of neural functions and protection of the nervous tissue cells from oxidative stress-induced damage. Exhibits GTPase and E3 ubiquitin-protein ligase activities. Regulates dendritic spine density and synaptic neurotransmission; its ability to hydrolyze GTP is involved in the maintenance of dendritic spine density. The protein is RING finger protein 112 (RNF112) of Homo sapiens (Human).